A 337-amino-acid chain; its full sequence is Exopolysaccharide phosphotransferase cps2G (337 aa).

It belongs to the stealth family.

This chain is Exopolysaccharide phosphotransferase cps2G (cps2G), found in Lactiplantibacillus plantarum (strain ATCC BAA-793 / NCIMB 8826 / WCFS1) (Lactobacillus plantarum).